The sequence spans 1189 residues: Pyruvate carboxylase (1189 aa).

Residues 21–473 enclose the Biotin carboxylation domain; the sequence is TMNKILVANR…WTTFIDDTPE (453 aa). Residues lysine 139, glutamate 223, and histidine 258 each coordinate ATP. In terms of domain architecture, ATP-grasp spans 143–340; that stretch reads RNLAYAANVP…IVAAQIQIAA (198 aa). The active site involves arginine 315. The Pyruvate carboxyltransferase domain maps to 559–826; it reads LMIMDTTWRD…ETGIPEANAR (268 aa). Substrate contacts are provided by residues 567–571 and arginine 640; that span reads RDAHQ. Aspartate 568 serves as a coordination point for a divalent metal cation. Lysine 736, histidine 766, and histidine 768 together coordinate a divalent metal cation. Position 736 is an N6-carboxylysine (lysine 736). Residue threonine 900 coordinates substrate. The Biotinyl-binding domain occupies 1099 to 1174; it reads KADAHNPNEI…DASDLIPKSS (76 aa). An N6-biotinyllysine modification is found at lysine 1140.

Biotin is required as a cofactor. Zn(2+) serves as cofactor.

The protein localises to the cytoplasm. It carries out the reaction hydrogencarbonate + pyruvate + ATP = oxaloacetate + ADP + phosphate + H(+). The protein operates within carbohydrate biosynthesis; gluconeogenesis. In terms of biological role, pyruvate carboxylase catalyzes a 2-step reaction, involving the ATP-dependent carboxylation of the covalently attached biotin in the first step and the transfer of the carboxyl group to pyruvate in the second. The chain is Pyruvate carboxylase (PYC1) from Komagataella pastoris (Yeast).